Consider the following 235-residue polypeptide: Small ribosomal subunit protein uS2c (235 aa).

Belongs to the universal ribosomal protein uS2 family.

Its subcellular location is the plastid. It is found in the chloroplast. The sequence is that of Small ribosomal subunit protein uS2c (rps2) from Marchantia polymorpha (Common liverwort).